Here is a 923-residue protein sequence, read N- to C-terminus: DNA gyrase subunit A (923 aa).

Positions 34 to 534 constitute a Topo IIA-type catalytic domain; that stretch reads LPDARDGLKP…SQVDLTIADL (501 aa). Y122 acts as the O-(5'-phospho-DNA)-tyrosine intermediate in catalysis. Residues 561-567 carry the GyrA-box motif; sequence QRRGGKG. The interval 881–923 is disordered; sequence ERVQEPSGGDDEDLPEGEEAAESLGESAESESEPAAEAEGNEE. 2 stretches are compositionally biased toward acidic residues: residues 888 to 901 and 908 to 923; these read GGDD…EEAA and AESE…GNEE.

The protein belongs to the type II topoisomerase GyrA/ParC subunit family. In terms of assembly, heterotetramer, composed of two GyrA and two GyrB chains. In the heterotetramer, GyrA contains the active site tyrosine that forms a transient covalent intermediate with DNA, while GyrB binds cofactors and catalyzes ATP hydrolysis.

The protein resides in the cytoplasm. It carries out the reaction ATP-dependent breakage, passage and rejoining of double-stranded DNA.. Functionally, a type II topoisomerase that negatively supercoils closed circular double-stranded (ds) DNA in an ATP-dependent manner to modulate DNA topology and maintain chromosomes in an underwound state. Negative supercoiling favors strand separation, and DNA replication, transcription, recombination and repair, all of which involve strand separation. Also able to catalyze the interconversion of other topological isomers of dsDNA rings, including catenanes and knotted rings. Type II topoisomerases break and join 2 DNA strands simultaneously in an ATP-dependent manner. The protein is DNA gyrase subunit A of Pseudomonas aeruginosa (strain ATCC 15692 / DSM 22644 / CIP 104116 / JCM 14847 / LMG 12228 / 1C / PRS 101 / PAO1).